The following is a 434-amino-acid chain: Nicotinate phosphoribosyltransferase (434 aa).

H242 carries the post-translational modification Phosphohistidine; by autocatalysis.

This sequence belongs to the NAPRTase family. Transiently phosphorylated on a His residue during the reaction cycle. Phosphorylation strongly increases the affinity for substrates and increases the rate of nicotinate D-ribonucleotide production. Dephosphorylation regenerates the low-affinity form of the enzyme, leading to product release.

The enzyme catalyses nicotinate + 5-phospho-alpha-D-ribose 1-diphosphate + ATP + H2O = nicotinate beta-D-ribonucleotide + ADP + phosphate + diphosphate. It participates in cofactor biosynthesis; NAD(+) biosynthesis; nicotinate D-ribonucleotide from nicotinate: step 1/1. Its function is as follows. Catalyzes the synthesis of beta-nicotinate D-ribonucleotide from nicotinate and 5-phospho-D-ribose 1-phosphate at the expense of ATP. This Bradyrhizobium diazoefficiens (strain JCM 10833 / BCRC 13528 / IAM 13628 / NBRC 14792 / USDA 110) protein is Nicotinate phosphoribosyltransferase.